The chain runs to 144 residues: Eukaryotic translation initiation factor 1A (144 aa).

The span at 1-15 shows a compositional bias: basic residues; that stretch reads MPKNKGKGGKNRKRG. Disordered stretches follow at residues 1–25 and 120–144; these read MPKN…DKRE and DVDG…IDKI. The segment covering 16-25 has biased composition (basic and acidic residues); sequence KNEADDDKRE. Residues 22–96 enclose the S1-like domain; it reads DKRELVFKED…DKADVILKYM (75 aa).

Belongs to the eIF-1A family.

In terms of biological role, seems to be required for maximal rate of protein biosynthesis. Enhances ribosome dissociation into subunits and stabilizes the binding of the initiator Met-tRNA(I) to 40 S ribosomal subunits. The sequence is that of Eukaryotic translation initiation factor 1A from Triticum aestivum (Wheat).